The primary structure comprises 198 residues: MSNVRVSNGSPSLERMDARQAEHPKPSACRNLFGPVNHEELTRDLEKHCRDMEEASQRKWNFDFQNHNPLEGRYQWQEVDKGSLPEFYYRPPRPPKGACKVPAQESQDVSGSRQAVPSIGSQAYSEDRHLVEQMPDPTDSPAGLAEQCPGMRKRPAADDSSSQNKRANRTEENVSDGSLNAGSVEQTPKKPGLRRHQT.

Positions 1-11 (MSNVRVSNGSP) are enriched in polar residues. The segment at 1 to 34 (MSNVRVSNGSPSLERMDARQAEHPKPSACRNLFG) is disordered. Ser-10 carries the post-translational modification Phosphoserine; by UHMK1. Residues 14–25 (ERMDARQAEHPK) are compositionally biased toward basic and acidic residues. The interval 51 to 91 (DMEEASQRKWNFDFQNHNPLEGRYQWQEVDKGSLPEFYYRP) is interaction with CDK2. Phosphotyrosine; by SRC is present on Tyr-74. The interval 85-198 (PEFYYRPPRP…KKPGLRRHQT (114 aa)) is disordered. Tyr-88 is modified (phosphotyrosine; by ABL, LYN and SRC). At Tyr-89 the chain carries Phosphotyrosine. A compositionally biased stretch (polar residues) spans 104–124 (QESQDVSGSRQAVPSIGSQAY). The Nuclear localization signal signature appears at 153 to 169 (KRPAADDSSSQNKRANR). Thr-170 carries the post-translational modification Phosphothreonine. Residues 175–186 (SDGSLNAGSVEQ) show a composition bias toward polar residues. Thr-187 is subject to Phosphothreonine; by PKB/AKT1, CDK1 and CDK2. Phosphothreonine; by CaMK1, PKB/AKT1, RPS6KA1, RPS6KA3 and PIM1 is present on Thr-198.

This sequence belongs to the CDI family. As to quaternary structure, forms a ternary complex composed of CCNE1, CDK2 and CDKN1B. Interacts directly with CCNE1; the interaction is inhibited by CDK2-dependent phosphorylation on Thr-187. Interacts with COPS5, subunit of the COP9 signalosome complex; the interaction leads to CDKN1B degradation. Interacts with NUP50; the interaction leads to nuclear import and degradation of phosphorylated CDKN1B. Interacts with CCND1 and SNX6. Interacts (Thr-198-phosphorylated form) with 14-3-3 proteins, binds strongly YWHAQ, weakly YWHAE and YWHAH, but not YWHAB nor YWHAZ; the interaction with YWHAQ results in translocation to the cytoplasm. Interacts with AKT1 and LYN; the interactions lead to cytoplasmic mislocation, phosphorylation of CDKN1B and inhibition of cell cycle arrest. Forms a ternary complex with CCNA2 and CDK2; CDKN1B inhibits the kinase activity of CDK2 through conformational rearrangements. Interacts (unphosphorylated form) with CDK2. Forms a complex with CDK2 and SPDYA, but does not directly interact with SPDYA. Forms a ternary complex composed of cyclin D, CDK4 and CDKN1B. Interacts (phosphorylated on Tyr-88 and Tyr-89) with CDK4; the interaction is required for cyclin D and CDK4 complex assembly, induces nuclear translocation and activates the CDK4 kinase activity. Interacts with GRB2. Interacts with PIM1. Identified in a complex with SKP1, SKP2 and CKS1B. Interacts with UHMK1; the interaction leads to cytoplasmic mislocation, phosphorylation of CDKN1B and inhibition of cell cycle arrest. Also interacts with CDK1. Dephosphorylated on Thr-187 by PPM1H, leading to CDKN1B stability. Phosphorylated; phosphorylation occurs on serine, threonine and tyrosine residues. Phosphorylation on Ser-10 is the major site of phosphorylation in resting cells, takes place at the G(0)-G(1) phase and leads to protein stability. Phosphorylation on other sites is greatly enhanced by mitogens, growth factors, cMYC and in certain cancer cell lines. The phosphorylated form found in the cytoplasm is inactivate. Phosphorylation on Thr-198 is required for interaction with 14-3-3 proteins. Phosphorylation on Thr-187, by CDK1 and CDK2 leads to protein ubiquitination and proteasomal degradation. Tyrosine phosphorylation promotes this process. Phosphorylation by PKB/AKT1 can be suppressed by LY294002, an inhibitor of the catalytic subunit of PI3K. Phosphorylation on Tyr-88 and Tyr-89 has no effect on binding CDK2, but is required for binding CDK4. Dephosphorylated on tyrosine residues by G-CSF. Dephosphorylated on Thr-187 by PPM1H, leading to CDKN1B stability. Post-translationally, ubiquitinated; in the cytoplasm by the KPC complex (composed of RNF123/KPC1 and UBAC1/KPC2) and, in the nucleus, by SCF(SKP2). The latter requires prior phosphorylation on Thr-187. Ubiquitinated; by a TRIM21-containing SCF(SKP2)-like complex; leads to its degradation. In terms of processing, subject to degradation in the lysosome. Interaction with SNX6 promotes lysosomal degradation.

It localises to the nucleus. Its subcellular location is the cytoplasm. The protein resides in the endosome. In terms of biological role, important regulator of cell cycle progression. Inhibits the kinase activity of CDK2 bound to cyclin A, but has little inhibitory activity on CDK2 bound to SPDYA. Involved in G1 arrest. Potent inhibitor of cyclin E- and cyclin A-CDK2 complexes. Forms a complex with cyclin type D-CDK4 complexes and is involved in the assembly, stability, and modulation of CCND1-CDK4 complex activation. Acts either as an inhibitor or an activator of cyclin type D-CDK4 complexes depending on its phosphorylation state and/or stoichometry. The protein is Cyclin-dependent kinase inhibitor 1B (CDKN1B) of Cricetulus griseus (Chinese hamster).